We begin with the raw amino-acid sequence, 112 residues long: cAMP-regulated phosphoprotein 19 (112 aa).

The span at 1–11 (MSAESPEPASA) shows a compositional bias: low complexity. The segment at 1-48 (MSAESPEPASAEEQKEMEDKVISPEKAEEAKLKARYPHLGQKPGGSDF) is disordered. Position 2 is an N-acetylserine (serine 2). The segment covering 12 to 32 (EEQKEMEDKVISPEKAEEAKL) has biased composition (basic and acidic residues). 2 positions are modified to phosphoserine; by GWL: serine 62 and serine 104. Residues 73 to 112 (KNKQLPTAAPDKTEVTGDHIPTPQDLPQRKPSLVASKLAG) form a disordered region. Serine 104 carries the post-translational modification Phosphoserine; by PKA.

Belongs to the endosulfine family. As to quaternary structure, interacts (when phosphorylated at Ser-62) with PPP2R2D. Post-translationally, phosphorylation at Ser-62 by MASTL/GWL during mitosis is essential for interaction with PPP2R2D (PR55-delta) and subsequent inactivation of PP2A.

It is found in the cytoplasm. Functionally, protein phosphatase inhibitor that specifically inhibits protein phosphatase 2A (PP2A) during mitosis. Inhibition of PP2A is enhanced when ARPP19 is phosphorylated. When phosphorylated at Ser-62 during mitosis, specifically interacts with PPP2R2D (PR55-delta) and inhibits its activity, leading to inactivation of PP2A, an essential condition to keep cyclin-B1-CDK1 activity high during M phase. This Gallus gallus (Chicken) protein is cAMP-regulated phosphoprotein 19 (ARPP19).